Here is a 315-residue protein sequence, read N- to C-terminus: Sulfate adenylyltransferase subunit 2 1 (315 aa).

The interval 287 to 315 (DSSSSERQGRAIDHDQSGSMERKKREGYF) is disordered. Residues 293–315 (RQGRAIDHDQSGSMERKKREGYF) show a composition bias toward basic and acidic residues.

It belongs to the PAPS reductase family. CysD subfamily. In terms of assembly, heterodimer composed of CysD, the smaller subunit, and CysN.

It carries out the reaction sulfate + ATP + H(+) = adenosine 5'-phosphosulfate + diphosphate. It functions in the pathway sulfur metabolism; hydrogen sulfide biosynthesis; sulfite from sulfate: step 1/3. Its function is as follows. With CysN forms the ATP sulfurylase (ATPS) that catalyzes the adenylation of sulfate producing adenosine 5'-phosphosulfate (APS) and diphosphate, the first enzymatic step in sulfur assimilation pathway. APS synthesis involves the formation of a high-energy phosphoric-sulfuric acid anhydride bond driven by GTP hydrolysis by CysN coupled to ATP hydrolysis by CysD. This Alkalilimnicola ehrlichii (strain ATCC BAA-1101 / DSM 17681 / MLHE-1) protein is Sulfate adenylyltransferase subunit 2 1.